The chain runs to 668 residues: 1-deoxy-D-xylulose-5-phosphate synthase (668 aa).

Thiamine diphosphate-binding positions include histidine 105 and 146–148 (AHS). Mg(2+) is bound at residue aspartate 177. Residues 178-179 (GA), asparagine 206, tyrosine 316, and glutamate 398 each bind thiamine diphosphate. Asparagine 206 provides a ligand contact to Mg(2+).

Belongs to the transketolase family. DXPS subfamily. Homodimer. It depends on Mg(2+) as a cofactor. Thiamine diphosphate serves as cofactor.

It catalyses the reaction D-glyceraldehyde 3-phosphate + pyruvate + H(+) = 1-deoxy-D-xylulose 5-phosphate + CO2. It functions in the pathway metabolic intermediate biosynthesis; 1-deoxy-D-xylulose 5-phosphate biosynthesis; 1-deoxy-D-xylulose 5-phosphate from D-glyceraldehyde 3-phosphate and pyruvate: step 1/1. In terms of biological role, catalyzes the acyloin condensation reaction between C atoms 2 and 3 of pyruvate and glyceraldehyde 3-phosphate to yield 1-deoxy-D-xylulose-5-phosphate (DXP). This is 1-deoxy-D-xylulose-5-phosphate synthase from Nitrobacter hamburgensis (strain DSM 10229 / NCIMB 13809 / X14).